Here is a 613-residue protein sequence, read N- to C-terminus: MAATAVAAAVAGTESAQGPPGPAASLELWLNKATDPSMSEQDWSAIQNFCEQVNTDPNGPTHAPWLLAHKIQSPQEKEALYALTVLEMCMNHCGEKFHSEVAKFRFLNELIKVLSPKYLGSWATGKVKGRVIEILFSWTVWFPEDIKIRDAYQMLKKQGIIKQDPKLPVDKILPPPSPWPKSSIFDADEEKSKLLTRLLKSNHPEDLQAANRLIKNLVKEEQEKSEKVSKRVSAVEEVRSHVKVLQEMLSMYRRPGQAPPDQEALQVVYERCEKLRPTLFRLASDTTDDDDALAEILQANDLLTQGVLLYKQVMEGRVTFGNRVTSSLGDIPVSRVFQNPAGCMKTCPLIDLEVDNGPAQMGTVVPSLLHQDLAALGISDAPVTGMVSGQNCCEEKRNPSSSTLPGGGVQNPSADRNLLDLLSAQPAPCPLNYVSQKSVPKEVPPGTKSSPGWSWEAGPLAPSPSSQNTPLAQVFVPLESVKPSSLPPLIVYDRNGFRILLHFSQTGAPGHPEVQVLLLTMMSTAPQPVWDIMFQVAVPKSMRVKLQPASSSKLPAFSPLMPPAVISQMLLLDNPHKEPIRLRYKLTFNQGGQPFSEVGEVKDFPDLAVLGAA.

The VHS domain maps to 33-163 (ATDPSMSEQD…MLKKQGIIKQ (131 aa)). The 128-residue stretch at 188-315 (DEEKSKLLTR…GVLLYKQVME (128 aa)) folds into the GAT domain. The segment at 316 to 483 (GRVTFGNRVT…VFVPLESVKP (168 aa)) is unstructured hinge. 2 disordered regions span residues 389–414 (GQNCCEEKRNPSSSTLPGGGVQNPSA) and 435–466 (SQKSVPKEVPPGTKSSPGWSWEAGPLAPSPSS). Residues 399-414 (PSSSTLPGGGVQNPSA) are compositionally biased toward polar residues. Ser-400 carries the post-translational modification Phosphoserine. In terms of domain architecture, GAE spans 484-605 (SSLPPLIVYD…SEVGEVKDFP (122 aa)).

The protein belongs to the GGA protein family. In terms of assembly, monomer. Interacts with NECAP1, TSG101, UBC and AFTPH/aftiphilin. Interacts with CNST. Interacts with GGA1 and GGA3. Binds to clathrin and activated ARFs, such as ARF1, ARF5 and ARF6. Binds RABEP1 and RABGEF1. Interacts with the type-I membrane proteins LRP3, M6PR/CD-MPR, IGF2R/CI-MPR and BACE1. Interacts (via N-terminal VHS domain) with SORL1/sorLA and SORT1 (via C-terminal cytosolic domain). Binds the accessory proteins CCDC91, P200, SYNRG, EPN4 and NECAP2. Interacts with ADRA2B. Interacts (via VHS domain) with PIK4B; the interaction is important for PIK4B location at the Golgi apparatus membrane. Post-translationally, ubiquitinated. Ubiquitously expressed.

It is found in the golgi apparatus. The protein localises to the trans-Golgi network membrane. It localises to the endosome membrane. The protein resides in the early endosome membrane. Its function is as follows. Plays a role in protein sorting and trafficking between the trans-Golgi network (TGN) and endosomes. Mediates the ARF-dependent recruitment of clathrin to the TGN and binds ubiquitinated proteins and membrane cargo molecules with a cytosolic acidic cluster-dileucine (DXXLL) motif. Mediates export of the GPCR receptor ADRA2B to the cell surface. Regulates retrograde transport of phosphorylated form of BACE1 from endosomes to the trans-Golgi network. The protein is ADP-ribosylation factor-binding protein GGA2 (GGA2) of Homo sapiens (Human).